We begin with the raw amino-acid sequence, 119 residues long: Fluoride-specific ion channel FluC (119 aa).

A run of 3 helical transmembrane segments spans residues 37 to 54 (LFAN…AETV), 61 to 83 (LLLI…ETVT), and 93 to 112 (ALSN…WLGL). Residues G69 and T72 each coordinate Na(+).

The protein belongs to the fluoride channel Fluc/FEX (TC 1.A.43) family.

It is found in the cell inner membrane. The enzyme catalyses fluoride(in) = fluoride(out). Na(+) is not transported, but it plays an essential structural role and its presence is essential for fluoride channel function. Functionally, fluoride-specific ion channel. Important for reducing fluoride concentration in the cell, thus reducing its toxicity. This is Fluoride-specific ion channel FluC from Neisseria meningitidis serogroup C (strain 053442).